Consider the following 156-residue polypeptide: FUN14 domain-containing protein 1 (156 aa).

Residues 19–22 carry the YXXL motif; the sequence is YEVL. Helical transmembrane passes span 49 to 69, 76 to 96, and 135 to 155; these read YSVATQIVMGGVTGWCAGFLF, AATAVGGGFLLLQIASHSGYV, and FIKQNIVVSSGFVGGFLLGLA.

This sequence belongs to the FUN14 family.

It is found in the mitochondrion outer membrane. In terms of biological role, acts as an activator of hypoxia-induced mitophagy, an important mechanism for mitochondrial quality control. The polypeptide is FUN14 domain-containing protein 1 (FUNDC1) (Gallus gallus (Chicken)).